The primary structure comprises 158 residues: UPF0262 protein Rsph17025_0594 (158 aa).

It belongs to the UPF0262 family.

The protein is UPF0262 protein Rsph17025_0594 of Cereibacter sphaeroides (strain ATCC 17025 / ATH 2.4.3) (Rhodobacter sphaeroides).